The sequence spans 396 residues: Putative carbamoyltransferase YgeW (396 aa).

Carbamoyl phosphate-binding positions include Ser71–Thr74, Gln98, His165–Gln168, and Cys330–Leu331.

The protein belongs to the aspartate/ornithine carbamoyltransferase superfamily. Homotrimer.

In Escherichia coli O6:H1 (strain CFT073 / ATCC 700928 / UPEC), this protein is Putative carbamoyltransferase YgeW (ygeW).